The primary structure comprises 276 residues: MAVRKLKPTSPGRRFQTVSSFEEITRSTPERSLTEGLTKKSGRNCYGRVTSRRRGGGHKRLYRIIDFRRDKVGVPAKVAHVEYDPNRSARIALLHYSDGEKRYILAPLGVKQGDVVVAGDSVDIKPGNAMALSRVPVGTIVHNIELYPGKGGQFCRAAGTYAQLVAKEGNYALLRMPSGEVRKVLVTCCATIGQVGNLDHEKISYGKAGRSRWLGRRPKVRGVAMNPIDHPLGGGEGRSSGGRHPVTPWGIPTKGFKTRDKKKASSKLIIKRRGQK.

Disordered regions lie at residues Arg26–Cys45 and Ala224–Lys276. Residues Arg259–Lys276 are compositionally biased toward basic residues.

The protein belongs to the universal ribosomal protein uL2 family. Part of the 50S ribosomal subunit. Forms a bridge to the 30S subunit in the 70S ribosome.

One of the primary rRNA binding proteins. Required for association of the 30S and 50S subunits to form the 70S ribosome, for tRNA binding and peptide bond formation. It has been suggested to have peptidyltransferase activity; this is somewhat controversial. Makes several contacts with the 16S rRNA in the 70S ribosome. In Oleidesulfovibrio alaskensis (strain ATCC BAA-1058 / DSM 17464 / G20) (Desulfovibrio alaskensis), this protein is Large ribosomal subunit protein uL2.